A 475-amino-acid polypeptide reads, in one-letter code: Adenosylhomocysteinase (475 aa).

Residues T66, D141, and E201 each coordinate substrate. 202–204 (TTT) provides a ligand contact to NAD(+). 2 residues coordinate substrate: K231 and D235. NAD(+) contacts are provided by residues N236, 265–270 (GYGEVG), E288, N323, 344–346 (IGH), and N389.

It belongs to the adenosylhomocysteinase family. NAD(+) is required as a cofactor.

The protein localises to the cytoplasm. The enzyme catalyses S-adenosyl-L-homocysteine + H2O = L-homocysteine + adenosine. It functions in the pathway amino-acid biosynthesis; L-homocysteine biosynthesis; L-homocysteine from S-adenosyl-L-homocysteine: step 1/1. May play a key role in the regulation of the intracellular concentration of adenosylhomocysteine. This is Adenosylhomocysteinase from Geobacter sulfurreducens (strain ATCC 51573 / DSM 12127 / PCA).